The following is a 379-amino-acid chain: Cytochrome b (379 aa).

4 helical membrane-spanning segments follow: residues 33–53 (FGSLLGMCLVIQILTGLFLAM), 77–98 (WLIRYLHANGASMFFICLFIHV), 113–133 (WNIGIILFLTTMATAFVGYVL), and 178–198 (FFAFHFILPFIIAAFALVHLL). Heme b contacts are provided by His83 and His97. His182 and His196 together coordinate heme b. His201 lines the a ubiquinone pocket. The next 4 helical transmembrane spans lie at 226–246 (TKDLLGIFLLLLVLMILALFF), 288–308 (LGGVLALVLSILILAAFPLLN), 320–340 (VTQIIYWIFIANLLVLTWIGG), and 347–367 (FTTIGQIASITYFTIIIILIP).

The protein belongs to the cytochrome b family. As to quaternary structure, the cytochrome bc1 complex contains 11 subunits: 3 respiratory subunits (MT-CYB, CYC1 and UQCRFS1), 2 core proteins (UQCRC1 and UQCRC2) and 6 low-molecular weight proteins (UQCRH/QCR6, UQCRB/QCR7, UQCRQ/QCR8, UQCR10/QCR9, UQCR11/QCR10 and a cleavage product of UQCRFS1). This cytochrome bc1 complex then forms a dimer. Requires heme b as cofactor.

It is found in the mitochondrion inner membrane. Functionally, component of the ubiquinol-cytochrome c reductase complex (complex III or cytochrome b-c1 complex) that is part of the mitochondrial respiratory chain. The b-c1 complex mediates electron transfer from ubiquinol to cytochrome c. Contributes to the generation of a proton gradient across the mitochondrial membrane that is then used for ATP synthesis. This Akodon reigi (Reig's grass mouse) protein is Cytochrome b (MT-CYB).